The sequence spans 194 residues: Inosine triphosphate pyrophosphatase (194 aa).

An ITP-binding site is contributed by 10–15; sequence TTNLKK. Residue glutamate 36 participates in Mg(2+) binding. Residues lysine 48, 66–67, lysine 83, lysine 166, and 171–172 each bind ITP; these read DT and HR.

Belongs to the HAM1 NTPase family. As to quaternary structure, homodimer. It depends on Mg(2+) as a cofactor. Requires Mn(2+) as cofactor.

It localises to the cytoplasm. The protein localises to the nucleus. It catalyses the reaction ITP + H2O = IMP + diphosphate + H(+). The catalysed reaction is dITP + H2O = dIMP + diphosphate + H(+). The enzyme catalyses XTP + H2O = XMP + diphosphate + H(+). Functionally, pyrophosphatase that hydrolyzes non-canonical purine nucleotides such as inosine triphosphate (ITP), deoxyinosine triphosphate (dITP) or xanthosine 5'-triphosphate (XTP) to their respective monophosphate derivatives. The enzyme does not distinguish between the deoxy- and ribose forms. Probably excludes non-canonical purines from RNA and DNA precursor pools, thus preventing their incorporation into RNA and DNA and avoiding chromosomal lesions. In Encephalitozoon intestinalis (strain ATCC 50506) (Microsporidian parasite), this protein is Inosine triphosphate pyrophosphatase.